Here is a 192-residue protein sequence, read N- to C-terminus: Late embryogenesis abundant protein 47 (192 aa).

Residues 5 to 9 carry the Nuclear localization signal (NLS) motif; sequence QLQKP. SMP domains are found at residues 68-125 and 133-190; these read ITIG…LNAR and TTLA…RINQ. The disordered stretch occupies residues 146–174; sequence LPSDKAATRKDAEGVTGAEMRNDPHLTTY. Basic and acidic residues predominate over residues 147–158; it reads PSDKAATRKDAE.

The protein belongs to the LEA type SMP family.

The protein resides in the cytoplasm. It is found in the nucleus. Its function is as follows. LEA proteins are late embryonic proteins abundant in higher plant seed embryos. The function of those proteins is not known. This chain is Late embryogenesis abundant protein 47, found in Arabidopsis thaliana (Mouse-ear cress).